Consider the following 416-residue polypeptide: Neurotensin receptor type 2 (416 aa).

The Extracellular portion of the chain corresponds to 1 to 32; it reads METSSPWPPRPSPSAGLSLEARLGVDTRLWAK. The chain crosses the membrane as a helical span at residues 33 to 55; sequence VLFTALYSLIFAFGTAGNALSVH. Residues 56 to 64 lie on the Cytoplasmic side of the membrane; the sequence is VVLKARAGR. The chain crosses the membrane as a helical span at residues 65–87; it reads PGRLRYHVLSLALSALLLLLVSM. Residues 88 to 109 lie on the Extracellular side of the membrane; sequence PMELYNFVWSHYPWVFGDLGCR. A disulfide bond links Cys-108 and Cys-194. The helical transmembrane segment at 110–131 threads the bilayer; that stretch reads GYYFVRELCAYATVLSVASLSA. Topologically, residues 132–154 are cytoplasmic; it reads ERCLAVCQPLRARRLLTPRRTRR. A helical transmembrane segment spans residues 155-176; that stretch reads LLSLVWVASLGLALPMAVIMGQ. Residues 177 to 216 lie on the Extracellular side of the membrane; that stretch reads KHEVESADGEPEPASRVCTVLVSRATLQVFIQVNVLVSFA. A helical transmembrane segment spans residues 217-237; it reads LPLALTAFLNGITVNHLMALY. Residues 238–297 are Cytoplasmic-facing; it reads SQVPSASAQVSSIPSRLELLSEEGLLGFITWRKTLSLGVQASLVRHKDASQIRSLQHSAQ. The chain crosses the membrane as a helical span at residues 298–318; it reads VLRAIVAVYVICWLPYHARRL. Over 319–337 the chain is Extracellular; that stretch reads MYCYIPDDGWTNELYDFYH. The chain crosses the membrane as a helical span at residues 338–358; sequence YFYMVTNTLFYVSSAVTPILY. Over 359 to 416 the chain is Cytoplasmic; that stretch reads NAVSSSFRKLFLESLGSLCGEQHSLVPLPQEAPESTTSTYSFRLWGSPRNPSLGEIQV. Cys-377 carries S-palmitoyl cysteine lipidation. Phosphoserine is present on Ser-410.

It belongs to the G-protein coupled receptor 1 family. Neurotensin receptor subfamily. NTSR2 sub-subfamily. Abundant in cortex and hypothalamus, and lower levels seen in the heart and intestine.

The protein resides in the cell membrane. Its function is as follows. Receptor for the tridecapeptide neurotensin. It is associated with G proteins that activate a phosphatidylinositol-calcium second messenger system. This is Neurotensin receptor type 2 (Ntsr2) from Rattus norvegicus (Rat).